The sequence spans 270 residues: Bifunctional folate synthesis protein (270 aa).

The DHNA stretch occupies residues 1–119 (MDQLQIKDLE…TCSVTIHRRK (119 aa)). Substrate contacts are provided by residues E21, Y53, and 72-73 (IE). Residue K99 is the Proton donor/acceptor; for DHNA activity of the active site. The segment at 120 to 270 (QRAFIALGSN…IRNLYDALKK (151 aa)) is HPPK. Residues 160 to 163 (TEPW), 171 to 173 (FAN), 192 to 195 (LAIE), 200 to 215 (RVRE…DLDL), 227 to 233 (DLILPHP), and 238 to 240 (RLF) contribute to the ATP site. Mg(2+) contacts are provided by D212 and D214.

The protein in the N-terminal section; belongs to the DHNA family. In the C-terminal section; belongs to the HPPK family. In terms of assembly, homotrimer or homotetramer.

It carries out the reaction 7,8-dihydroneopterin = 6-hydroxymethyl-7,8-dihydropterin + glycolaldehyde. The catalysed reaction is 6-hydroxymethyl-7,8-dihydropterin + ATP = (7,8-dihydropterin-6-yl)methyl diphosphate + AMP + H(+). Its pathway is cofactor biosynthesis; tetrahydrofolate biosynthesis; 2-amino-4-hydroxy-6-hydroxymethyl-7,8-dihydropteridine diphosphate from 7,8-dihydroneopterin triphosphate: step 3/4. It functions in the pathway cofactor biosynthesis; tetrahydrofolate biosynthesis; 2-amino-4-hydroxy-6-hydroxymethyl-7,8-dihydropteridine diphosphate from 7,8-dihydroneopterin triphosphate: step 4/4. Its function is as follows. Catalyzes two sequential steps of tetrahydrofolate biosynthesis, the conversion of 7,8-dihydroneopterin to 6-hydroxymethyl-7,8-dihydropterin diphosphate. This Streptococcus pneumoniae serotype 4 (strain ATCC BAA-334 / TIGR4) protein is Bifunctional folate synthesis protein.